The chain runs to 91 residues: MAVKIRLKRMGSKKSPFYRIVVADSRSPRDGRFIETVGTYNPLKDPAEVVLKEDLVLDWLSKGAQPSDTVRNILSKEGVMKKHHEAKNVKK.

Belongs to the bacterial ribosomal protein bS16 family.

The protein is Small ribosomal subunit protein bS16 of Enterococcus faecalis (strain ATCC 700802 / V583).